We begin with the raw amino-acid sequence, 598 residues long: MTDSTTHDALPAWQTRDHLDDPVIGELRNRFGPEAFTVQPTRTGMPVVWVKPDQLLEVMTFLRKQPKPYVMLFDLHGVDERLRTHRDGLPAADFSVFYHLISIERNRDIMLKVALSEKDLHVPTATKVFPNANWYERETWEMFGITFDGHPHLSRIMMPQTWEGHPLRKDYPARATEFDPFVLTKQKEDLEMEALTFKPEDWGMKRGTENEDFMFLNLGPNHPSAHGAFRIILQLDGEEIVDCVPDIGYHHRGAEKMGERQSWHSYIPYTDRIEYLGGCVNEMPYVLAVEKLAGIKVPDRVDTIRVMLSELFRINSHLLYISTFIQDVGAMTPVFFAFTDRQKIYDLVEAITGFRMHPAWFRIGGVAHDLPRGWDRLLREFLEWMPKRLDSYVKAALKNSILKGRSVGVASYNAKEALEWGVTGAGLRATGIEFDVRKWRPYSGYENFDFEVPVGDGNSDCYTRVMLKVEELRQSLRILEQCLNNMPEGPFKADHPLTTPPPKERTLQHIETLITHFLQVSWGPVMPANESFQMIEATKGINSYYLTSDGSTMSYRTRVRTPSFAHLQQIPAVIRGSLVSDLIVYLGSIDFVMSDVDR.

The interval 1–188 (MTDSTTHDAL…DPFVLTKQKE (188 aa)) is NADH dehydrogenase I subunit C. Residues 212-598 (DFMFLNLGPN…IDFVMSDVDR (387 aa)) form an NADH dehydrogenase I subunit D region.

This sequence in the N-terminal section; belongs to the complex I 30 kDa subunit family. In the C-terminal section; belongs to the complex I 49 kDa subunit family. In terms of assembly, NDH-1 is composed of 13 different subunits. Subunits NuoB, CD, E, F, and G constitute the peripheral sector of the complex.

The protein localises to the cell inner membrane. It carries out the reaction a quinone + NADH + 5 H(+)(in) = a quinol + NAD(+) + 4 H(+)(out). NDH-1 shuttles electrons from NADH, via FMN and iron-sulfur (Fe-S) centers, to quinones in the respiratory chain. The immediate electron acceptor for the enzyme in this species is believed to be ubiquinone. Couples the redox reaction to proton translocation (for every two electrons transferred, four hydrogen ions are translocated across the cytoplasmic membrane), and thus conserves the redox energy in a proton gradient. The chain is NADH-quinone oxidoreductase subunit C/D from Serratia proteamaculans (strain 568).